The chain runs to 640 residues: 1,4-alpha-glucan branching enzyme GlgB (640 aa).

Residue Asp-317 is the Nucleophile of the active site. Glu-370 functions as the Proton donor in the catalytic mechanism.

Belongs to the glycosyl hydrolase 13 family. GlgB subfamily. As to quaternary structure, monomer.

The enzyme catalyses Transfers a segment of a (1-&gt;4)-alpha-D-glucan chain to a primary hydroxy group in a similar glucan chain.. It participates in glycan biosynthesis; glycogen biosynthesis. Functionally, catalyzes the formation of the alpha-1,6-glucosidic linkages in glycogen by scission of a 1,4-alpha-linked oligosaccharide from growing alpha-1,4-glucan chains and the subsequent attachment of the oligosaccharide to the alpha-1,6 position. This Nitratidesulfovibrio vulgaris (strain DP4) (Desulfovibrio vulgaris) protein is 1,4-alpha-glucan branching enzyme GlgB.